Reading from the N-terminus, the 154-residue chain is Histidine-containing phosphotransfer protein 1 (154 aa).

N-acetylmethionine is present on M1. Positions 38–143 constitute an HPt domain; the sequence is NPDFVSQVVT…FKLEQQIVAS (106 aa). Residue H79 is modified to Phosphohistidine.

Interacts with the B-type response regulators ARR1, ARR2, ARR4 and ARR9. Binds to ETR1, AHK2, AHK3, AHK4, AHK5 and FBR12. Post-translationally, two-component system major event consists of a His-to-Asp phosphorelay between a sensor histidine kinase (HK) and a response regulator (RR). In plants, the His-to-Asp phosphorelay involves an additional intermediate named Histidine-containing phosphotransfer protein (HPt). This multistep phosphorelay consists of a His-Asp-His-Asp sequential transfer of a phosphate group between first a His and an Asp of the HK protein, followed by the transfer to a conserved His of the HPt protein and finally the transfer to an Asp in the receiver domain of the RR protein. As to expression, strongly expressed in roots.

It is found in the cytoplasm. It localises to the cytosol. Its subcellular location is the nucleus. Its function is as follows. Functions as a two-component phosphorelay mediators between cytokinin sensor histidine kinases and response regulator (B-type ARRs). Plays an important role in propagating cytokinin signal transduction through the multistep His-to-Asp phosphorelay. The chain is Histidine-containing phosphotransfer protein 1 (AHP1) from Arabidopsis thaliana (Mouse-ear cress).